A 475-amino-acid polypeptide reads, in one-letter code: Chromosomal replication initiator protein DnaA (475 aa).

A domain I, interacts with DnaA modulators region spans residues 1 to 73 (MTNSEQERWS…LSCWQAEMPE (73 aa)). Residues 73-131 (EVHRIDLSVRTAMRCATPAKEAPVAVEARRAERGDAKPADTRAPVMTPVAASHDALGGS) are domain II. The domain III, AAA+ region stretch occupies residues 132–354 (PLDPRLTFAS…GAINRLLAHS (223 aa)). ATP contacts are provided by Gly179, Gly181, Lys182, and Thr183. A domain IV, binds dsDNA region spans residues 355 to 475 (KLNNQPVTLD…VEALKRQLQD (121 aa)).

Belongs to the DnaA family. Oligomerizes as a right-handed, spiral filament on DNA at oriC.

The protein localises to the cytoplasm. Functionally, plays an essential role in the initiation and regulation of chromosomal replication. ATP-DnaA binds to the origin of replication (oriC) to initiate formation of the DNA replication initiation complex once per cell cycle. Binds the DnaA box (a 9 base pair repeat at the origin) and separates the double-stranded (ds)DNA. Forms a right-handed helical filament on oriC DNA; dsDNA binds to the exterior of the filament while single-stranded (ss)DNA is stabiized in the filament's interior. The ATP-DnaA-oriC complex binds and stabilizes one strand of the AT-rich DNA unwinding element (DUE), permitting loading of DNA polymerase. After initiation quickly degrades to an ADP-DnaA complex that is not apt for DNA replication. Binds acidic phospholipids. This chain is Chromosomal replication initiator protein DnaA, found in Bradyrhizobium sp. (strain BTAi1 / ATCC BAA-1182).